The following is a 333-amino-acid chain: Ketol-acid reductoisomerase (NADP(+)) (333 aa).

The region spanning 2 to 182 (AELFYDADAD…GGTRAGVIKT (181 aa)) is the KARI N-terminal Rossmann domain. NADP(+) contacts are provided by residues 25 to 28 (YGSQ), Ser51, Ser53, and 83 to 86 (DPIQ). His108 is an active-site residue. Residue Gly134 coordinates NADP(+). The KARI C-terminal knotted domain occupies 183-328 (TFTEETETDL…KELRKLMSWV (146 aa)). Mg(2+)-binding residues include Asp191, Glu195, Glu227, and Glu231. Ser252 is a binding site for substrate.

It belongs to the ketol-acid reductoisomerase family. The cofactor is Mg(2+).

The catalysed reaction is (2R)-2,3-dihydroxy-3-methylbutanoate + NADP(+) = (2S)-2-acetolactate + NADPH + H(+). It carries out the reaction (2R,3R)-2,3-dihydroxy-3-methylpentanoate + NADP(+) = (S)-2-ethyl-2-hydroxy-3-oxobutanoate + NADPH + H(+). Its pathway is amino-acid biosynthesis; L-isoleucine biosynthesis; L-isoleucine from 2-oxobutanoate: step 2/4. It functions in the pathway amino-acid biosynthesis; L-valine biosynthesis; L-valine from pyruvate: step 2/4. In terms of biological role, involved in the biosynthesis of branched-chain amino acids (BCAA). Catalyzes an alkyl-migration followed by a ketol-acid reduction of (S)-2-acetolactate (S2AL) to yield (R)-2,3-dihydroxy-isovalerate. In the isomerase reaction, S2AL is rearranged via a Mg-dependent methyl migration to produce 3-hydroxy-3-methyl-2-ketobutyrate (HMKB). In the reductase reaction, this 2-ketoacid undergoes a metal-dependent reduction by NADPH to yield (R)-2,3-dihydroxy-isovalerate. The sequence is that of Ketol-acid reductoisomerase (NADP(+)) from Streptomyces avermitilis (strain ATCC 31267 / DSM 46492 / JCM 5070 / NBRC 14893 / NCIMB 12804 / NRRL 8165 / MA-4680).